The chain runs to 317 residues: 3',5'-bisphosphate nucleotidase (317 aa).

Aspartate 46 functions as the Proton acceptor in the catalytic mechanism. Residues glutamate 69, aspartate 118, isoleucine 120, and aspartate 121 each coordinate Mg(2+). The active-site Proton acceptor is the threonine 123. Threonine 123 is an adenosine 3',5'-bisphosphate binding site. AMP-binding residues include serine 198, histidine 203, serine 227, lysine 230, arginine 244, tyrosine 251, and aspartate 257. 4 residues coordinate adenosine 3',5'-bisphosphate: histidine 203, serine 227, lysine 230, and arginine 244. Aspartate 257 serves as a coordination point for Mg(2+). Aspartate 257 is a binding site for adenosine 3',5'-bisphosphate.

Belongs to the inositol monophosphatase superfamily. In terms of assembly, monomer. Mg(2+) is required as a cofactor.

It localises to the cytoplasm. The enzyme catalyses adenosine 3',5'-bisphosphate + H2O = AMP + phosphate. It carries out the reaction 1D-myo-inositol 1,4-bisphosphate + H2O = 1D-myo-inositol 4-phosphate + phosphate. Its activity is regulated as follows. Inhibited by Li(2+). Functionally, phosphatase that converts 3'-phosphoadenosine 5'-phosphate (PAP) to AMP. Is also able to hydrolyze inositol 1,4-bisphosphate but with less efficiency. This Entamoeba histolytica (strain ATCC 30459 / HM-1:IMSS / ABRM) protein is 3',5'-bisphosphate nucleotidase.